Consider the following 134-residue polypeptide: MSWQAYVDDHLMCDIEGPEDHRLTAAAIVGHDGSVWAQSATFPQFKPEEMNGIMTDFNEPGHLAPTGLHLGGTKYMVIQGEAGAVVRGKKGSGGITIKKTGQALVFGIYEEPVTPGQCNMVVERLGDYLLEQGL.

Cysteine 13 and cysteine 118 are joined by a disulfide. Residues 84-100 (AVVRGKKGSGGITIKKT) carry the Involved in PIP2 interaction motif. Threonine 114 is subject to Phosphothreonine.

This sequence belongs to the profilin family. In terms of assembly, occurs in many kinds of cells as a complex with monomeric actin in a 1:1 ratio. In terms of processing, phosphorylated by MAP kinases.

Its subcellular location is the cytoplasm. The protein localises to the cytoskeleton. Binds to actin and affects the structure of the cytoskeleton. At high concentrations, profilin prevents the polymerization of actin, whereas it enhances it at low concentrations. This is Profilin-1 from Olea europaea (Common olive).